The primary structure comprises 343 residues: Ribosomal RNA small subunit methyltransferase C (343 aa).

It belongs to the methyltransferase superfamily. RsmC family. Monomer.

Its subcellular location is the cytoplasm. It catalyses the reaction guanosine(1207) in 16S rRNA + S-adenosyl-L-methionine = N(2)-methylguanosine(1207) in 16S rRNA + S-adenosyl-L-homocysteine + H(+). Functionally, specifically methylates the guanine in position 1207 of 16S rRNA in the 30S particle. In Pseudoalteromonas atlantica (strain T6c / ATCC BAA-1087), this protein is Ribosomal RNA small subunit methyltransferase C.